The primary structure comprises 196 residues: Probable inactive nicotinamidase At3g16190 (196 aa).

It belongs to the isochorismatase family.

Its function is as follows. Does not possess nicotinamidase activity in vitro. The sequence is that of Probable inactive nicotinamidase At3g16190 from Arabidopsis thaliana (Mouse-ear cress).